A 205-amino-acid chain; its full sequence is Cell wall / vacuolar inhibitor of fructosidase 1 (205 aa).

The signal sequence occupies residues 1–23; it reads MKMMKVMMLIVMMMMVMVMVSEG. 2 cysteine pairs are disulfide-bonded: Cys-30–Cys-39 and Cys-93–Cys-134. N-linked (GlcNAc...) asparagine glycosylation is found at Asn-139 and Asn-156.

It belongs to the PMEI family. Mostly expressed in roots, senescent leaves and flowers (in sepals), and, to a lower extent, in stems, specifically in the vascular tissues (e.g. in the phloem).

It localises to the vacuole. Inhibits fructosidases from vacuoles (vacuolar invertase VI). In Arabidopsis thaliana (Mouse-ear cress), this protein is Cell wall / vacuolar inhibitor of fructosidase 1 (C/VIF1).